The chain runs to 238 residues: Probable transcriptional regulatory protein VS_II1504 (238 aa).

It belongs to the TACO1 family.

It localises to the cytoplasm. The chain is Probable transcriptional regulatory protein VS_II1504 from Vibrio atlanticus (strain LGP32) (Vibrio splendidus (strain Mel32)).